The chain runs to 493 residues: Dipeptide permease D (493 aa).

Over 1–13 the chain is Cytoplasmic; that stretch reads MNKHASQPRAIYY. The helical transmembrane segment at 14-34 threads the bilayer; that stretch reads VVALQIWEYFSFYGMRALLIL. Residues 35-48 lie on the Periplasmic side of the membrane; that stretch reads YLTNQLKYNDTHAY. The helical transmembrane segment at 49 to 69 threads the bilayer; that stretch reads ELFSAYCSLVYVTPILGGFLA. The Cytoplasmic segment spans residues 70-77; it reads DKVLGNRM. A helical membrane pass occupies residues 78-98; the sequence is AVMLGALLMAIGHVVLGASEI. Residues 99-100 lie on the Periplasmic side of the membrane; the sequence is HP. The chain crosses the membrane as a helical span at residues 101–121; that stretch reads SFLYLSLAIIVCGYGLFKSNV. Over 122–137 the chain is Cytoplasmic; it reads SCLLGELYEPTDPRRD. Residues 138–158 form a helical membrane-spanning segment; that stretch reads GGFSLMYAAGNVGSIIAPIAC. The Periplasmic portion of the chain corresponds to 159 to 166; sequence GYAQEEYS. Residues 167–187 form a helical membrane-spanning segment; sequence WAMGFGLAAVGMIAGLVIFLC. Over 188–211 the chain is Cytoplasmic; the sequence is GNRHFTHTRGVNKKVLRATNFLLP. The helical transmembrane segment at 212-232 threads the bilayer; that stretch reads NWGWLLVLLVATPALITILFW. Residues 233 to 234 are Periplasmic-facing; the sequence is KE. Residues 235 to 255 form a helical membrane-spanning segment; that stretch reads WSVYALIVATIIGLGVLAKIY. Residues 256 to 266 lie on the Cytoplasmic side of the membrane; that stretch reads RKAENQKQRKE. Residues 267–287 form a helical membrane-spanning segment; the sequence is LGLIVTLTFFSMLFWAFAQQG. The Periplasmic segment spans residues 288 to 311; it reads GSSISLYIDRFVNRDMFGYTVPTA. The chain crosses the membrane as a helical span at residues 312 to 332; sequence MFQSINAFAVMLCGVFLAWVV. At 333–343 the chain is on the cytoplasmic side; the sequence is KESVAGNRTVR. Residues 344–364 form a helical membrane-spanning segment; the sequence is IWGKFALGLGLMSAGFCILTL. The Periplasmic portion of the chain corresponds to 365-378; it reads SARWSAMYGHSSLP. Residues 379–399 form a helical membrane-spanning segment; it reads LMVLGLAVMGFAELFIDPVAM. At 400–412 the chain is on the cytoplasmic side; sequence SQITRIEIPGVTG. The chain crosses the membrane as a helical span at residues 413 to 433; that stretch reads VLTGIYMLLSGAIANYLAGVI. Residues 434–461 lie on the Periplasmic side of the membrane; that stretch reads ADQTSQASFDASGAINYSINAYIEVFDQ. The helical transmembrane segment at 462-482 threads the bilayer; it reads ITWGALACVGLVLMIWLYQAL. Topologically, residues 483–493 are cytoplasmic; that stretch reads KFRNRALALES.

Belongs to the major facilitator superfamily. Proton-dependent oligopeptide transporter (POT/PTR) (TC 2.A.17) family. DtpD subfamily.

The protein resides in the cell inner membrane. In terms of biological role, probable proton-dependent permease that transports dipeptides. The polypeptide is Dipeptide permease D (dtpD) (Escherichia coli (strain K12)).